The chain runs to 272 residues: Exosome complex component Rrp42 (272 aa).

This sequence belongs to the RNase PH family. Rrp42 subfamily. As to quaternary structure, component of the archaeal exosome complex. Forms a hexameric ring-like arrangement composed of 3 Rrp41-Rrp42 heterodimers. The hexameric ring associates with a trimer of Rrp4 and/or Csl4 subunits.

The protein resides in the cytoplasm. In terms of biological role, non-catalytic component of the exosome, which is a complex involved in RNA degradation. Contributes to the structuring of the Rrp41 active site. This is Exosome complex component Rrp42 from Thermococcus onnurineus (strain NA1).